A 204-amino-acid chain; its full sequence is UPF0637 protein lin1053 (204 aa).

It belongs to the UPF0637 family.

This Listeria innocua serovar 6a (strain ATCC BAA-680 / CLIP 11262) protein is UPF0637 protein lin1053.